The sequence spans 212 residues: Urease accessory protein UreG 2 (212 aa).

A GTP-binding site is contributed by 11–18 (GPVGSGKT).

The protein belongs to the SIMIBI class G3E GTPase family. UreG subfamily. As to quaternary structure, homodimer. UreD, UreF and UreG form a complex that acts as a GTP-hydrolysis-dependent molecular chaperone, activating the urease apoprotein by helping to assemble the nickel containing metallocenter of UreC. The UreE protein probably delivers the nickel.

It localises to the cytoplasm. Its function is as follows. Facilitates the functional incorporation of the urease nickel metallocenter. This process requires GTP hydrolysis, probably effectuated by UreG. The sequence is that of Urease accessory protein UreG 2 from Brucella abortus (strain 2308).